A 196-amino-acid polypeptide reads, in one-letter code: Small ribosomal subunit protein uS4c (196 aa).

Over residues 1-14 (MSRYRGPRLKKIRR) the composition is skewed to basic residues. Residues 1 to 43 (MSRYRGPRLKKIRRLGALPGLTRKTPKSGSNPKKKFHSGKKEQ) form a disordered region. Residues 89–169 (MRLDNILFRL…LPKHLTIDTL (81 aa)) enclose the S4 RNA-binding domain.

This sequence belongs to the universal ribosomal protein uS4 family. Part of the 30S ribosomal subunit. Contacts protein S5. The interaction surface between S4 and S5 is involved in control of translational fidelity.

Its subcellular location is the plastid. It is found in the chloroplast. In terms of biological role, one of the primary rRNA binding proteins, it binds directly to 16S rRNA where it nucleates assembly of the body of the 30S subunit. Functionally, with S5 and S12 plays an important role in translational accuracy. This is Small ribosomal subunit protein uS4c (rps4) from Melica uniflora (Wood melick grass).